A 353-amino-acid polypeptide reads, in one-letter code: Putative glycosyltransferase TagX (353 aa).

The protein belongs to the glycosyltransferase 2 family.

This is Putative glycosyltransferase TagX (tagX) from Staphylococcus aureus (strain COL).